The sequence spans 492 residues: Aspartyl/glutamyl-tRNA(Asn/Gln) amidotransferase subunit B (492 aa).

Belongs to the GatB/GatE family. GatB subfamily. As to quaternary structure, heterotrimer of A, B and C subunits.

The catalysed reaction is L-glutamyl-tRNA(Gln) + L-glutamine + ATP + H2O = L-glutaminyl-tRNA(Gln) + L-glutamate + ADP + phosphate + H(+). It catalyses the reaction L-aspartyl-tRNA(Asn) + L-glutamine + ATP + H2O = L-asparaginyl-tRNA(Asn) + L-glutamate + ADP + phosphate + 2 H(+). In terms of biological role, allows the formation of correctly charged Asn-tRNA(Asn) or Gln-tRNA(Gln) through the transamidation of misacylated Asp-tRNA(Asn) or Glu-tRNA(Gln) in organisms which lack either or both of asparaginyl-tRNA or glutaminyl-tRNA synthetases. The reaction takes place in the presence of glutamine and ATP through an activated phospho-Asp-tRNA(Asn) or phospho-Glu-tRNA(Gln). The protein is Aspartyl/glutamyl-tRNA(Asn/Gln) amidotransferase subunit B of Bradyrhizobium diazoefficiens (strain JCM 10833 / BCRC 13528 / IAM 13628 / NBRC 14792 / USDA 110).